The primary structure comprises 873 residues: Protein SEY1 (873 aa).

Topologically, residues 1-750 are cytoplasmic; the sequence is MVANGHFFAG…KRSAIGGITQ (750 aa). The GB1/RHD3-type G domain maps to 50–308; sequence GFNYHLISVF…IPADGFAVYA (259 aa). Residue 60-67 participates in GTP binding; it reads GSQSTGKS. Positions 677-701 are disordered; sequence LDKWIGHTPSSATPADEEDLTPIGG. A compositionally biased stretch (acidic residues) spans 691 to 701; that stretch reads ADEEDLTPIGG. A helical membrane pass occupies residues 751 to 771; it reads VPLYFYGLLLALGWNEIVAVL. The Lumenal segment spans residues 772 to 774; it reads RNP. The helical transmembrane segment at 775–795 threads the bilayer; that stretch reads AYFLLLFVCAVTAYVTYQLNL. Topologically, residues 796 to 873 are cytoplasmic; the sequence is WGPIIKMTEA…IDDADDDDDF (78 aa). The interval 841-873 is disordered; sequence EGYDMSNMKNRKSAGGYQNNRSHIDDADDDDDF.

This sequence belongs to the TRAFAC class dynamin-like GTPase superfamily. GB1/RHD3 GTPase family. RHD3 subfamily.

The protein resides in the endoplasmic reticulum membrane. In terms of biological role, cooperates with the reticulon proteins and tubule-shaping DP1 family proteins to generate and maintain the structure of the tubular endoplasmic reticulum network. Has GTPase activity, which is required for its function in ER organization. The sequence is that of Protein SEY1 from Paracoccidioides lutzii (strain ATCC MYA-826 / Pb01) (Paracoccidioides brasiliensis).